Here is a 346-residue protein sequence, read N- to C-terminus: MAEITAKLVKELREKSGAGVMDAKKALVETDGDIEKAIELLREKGMAKAAKKADRVAAEGLTGVYVNGNVAAVIEVNAETDFVAKNAQFVELVNTTAKVIAEGKPANNEEALALIMPSGETLEAAYVSATATIGEKISFRRFALIEKTDAQHFGAYQHNGGRIGVISVVEGGDEALAKQLSMHIAAMKPTVLSYKELDEQFVKDELAQLNHVIDQDNESRAMVNKPALPHLKYGSKAQLTDDVIAQAEADIKAELAAEGKPEKIWDKIIPGKMDRFMLDNTKVDQAYTLLAQVYIMDDSKTVEAYLESVNASVVEFARFEVGEGIEKAANDFEAEVAATMAAALNN.

Positions 80–83 are involved in Mg(2+) ion dislocation from EF-Tu; the sequence is TDFV.

The protein belongs to the EF-Ts family.

Its subcellular location is the cytoplasm. Associates with the EF-Tu.GDP complex and induces the exchange of GDP to GTP. It remains bound to the aminoacyl-tRNA.EF-Tu.GTP complex up to the GTP hydrolysis stage on the ribosome. The sequence is that of Elongation factor Ts (tsf) from Streptococcus pneumoniae (strain ATCC BAA-255 / R6).